Here is a 126-residue protein sequence, read N- to C-terminus: Fluoride-specific ion channel FluC (126 aa).

The next 4 helical transmembrane spans lie at 5–25, 37–57, 65–85, and 101–121; these read ILVAAGGAIGASLRYLLGAGV, VAIMMANVLGSIAMGFFVVWA, LSPFVMTGVLGGFTTFSAFSL, and LYVALSVGLSVFGLMAGLWVA. Na(+)-binding residues include Gly75 and Thr78.

The protein belongs to the fluoride channel Fluc/FEX (TC 1.A.43) family.

Its subcellular location is the cell inner membrane. It carries out the reaction fluoride(in) = fluoride(out). With respect to regulation, na(+) is not transported, but it plays an essential structural role and its presence is essential for fluoride channel function. In terms of biological role, fluoride-specific ion channel. Important for reducing fluoride concentration in the cell, thus reducing its toxicity. In Roseobacter denitrificans (strain ATCC 33942 / OCh 114) (Erythrobacter sp. (strain OCh 114)), this protein is Fluoride-specific ion channel FluC.